The chain runs to 802 residues: Ras GTPase-activating protein 4 (802 aa).

2 consecutive C2 domains span residues 1-105 (MAKR…SGWT) and 116-232 (VQGE…EGWF). Residues Asp-21, Asp-27, Asp-74, Asp-76, Ser-79, Asp-82, Asp-149, Asp-155, Asp-202, Asp-204, Ser-207, and Asp-210 each contribute to the Ca(2+) site. The Ras-GAP domain maps to 317-545 (GLAKDFLDLL…AQLKDFIMKL (229 aa)). One can recognise a PH domain in the interval 565–672 (PPVKEGPLFI…WLSALRKAST (108 aa)). A Btk-type zinc finger spans residues 674-710 (NRGLLRSYHPGIFRGDKWSCCHQKDKTDQGCDKTHSR). His-682, Cys-693, Cys-694, and Cys-704 together coordinate Zn(2+).

Ca(2+) serves as cofactor. Isoform 2 is expressed in osteoblasts.

The protein localises to the cytoplasm. Its subcellular location is the cytosol. It is found in the cell membrane. Its function is as follows. Ca(2+)-dependent Ras GTPase-activating protein, that switches off the Ras-MAPK pathway following a stimulus that elevates intracellular calcium. Functions as an adaptor for Cdc42 and Rac1 during FcR-mediated phagocytosis. Isoform 2 activates the Ras pathway and promotes RANKL shedding by modulating the expression of MMP14. This is Ras GTPase-activating protein 4 (Rasa4) from Mus musculus (Mouse).